Here is a 286-residue protein sequence, read N- to C-terminus: 3-hydroxyanthranilate 3,4-dioxygenase (286 aa).

The segment at 1 to 160 (MERRLGVRAW…SEQYRTGKPI (160 aa)) is domain A (catalytic). Residue R43 coordinates O2. Residues H47, E53, and H91 each coordinate Fe cation. Residue E53 coordinates substrate. Substrate is bound by residues R95 and E105. Positions 161 to 177 (PDQLLKEPPFPLSTRSI) are linker. The domain B stretch occupies residues 178-286 (MEPMSLDAWL…QDPACKKPLG (109 aa)).

This sequence belongs to the 3-HAO family. In terms of assembly, monomer. It depends on Fe(2+) as a cofactor.

It localises to the cytoplasm. Its subcellular location is the cytosol. The enzyme catalyses 3-hydroxyanthranilate + O2 = (2Z,4Z)-2-amino-3-carboxymuconate 6-semialdehyde. It participates in cofactor biosynthesis; NAD(+) biosynthesis; quinolinate from L-kynurenine: step 3/3. Its function is as follows. Catalyzes the oxidative ring opening of 3-hydroxyanthranilate to 2-amino-3-carboxymuconate semialdehyde, which spontaneously cyclizes to quinolinate. The chain is 3-hydroxyanthranilate 3,4-dioxygenase from Homo sapiens (Human).